The following is a 220-amino-acid chain: Ribosomal RNA small subunit methyltransferase G (220 aa).

Residues Gly82, Leu87, 105-107 (DST), 133-134 (VE), and Arg147 each bind S-adenosyl-L-methionine.

It belongs to the methyltransferase superfamily. RNA methyltransferase RsmG family.

The protein resides in the cytoplasm. Its function is as follows. Specifically methylates the N7 position of a guanine in 16S rRNA. The chain is Ribosomal RNA small subunit methyltransferase G from Chlorobium limicola (strain DSM 245 / NBRC 103803 / 6330).